Reading from the N-terminus, the 509-residue chain is 2,3-bisphosphoglycerate-independent phosphoglycerate mutase (509 aa).

Mn(2+) is bound by residues aspartate 12 and serine 62. Catalysis depends on serine 62, which acts as the Phosphoserine intermediate. Substrate is bound by residues histidine 123, 153–154 (RD), arginine 185, arginine 191, 260–263 (RPDR), and lysine 333. Mn(2+) is bound by residues aspartate 400, histidine 404, aspartate 441, histidine 442, and histidine 460.

The protein belongs to the BPG-independent phosphoglycerate mutase family. Monomer. Mn(2+) serves as cofactor.

It carries out the reaction (2R)-2-phosphoglycerate = (2R)-3-phosphoglycerate. The protein operates within carbohydrate degradation; glycolysis; pyruvate from D-glyceraldehyde 3-phosphate: step 3/5. In terms of biological role, catalyzes the interconversion of 2-phosphoglycerate and 3-phosphoglycerate. In Clostridium kluyveri (strain ATCC 8527 / DSM 555 / NBRC 12016 / NCIMB 10680 / K1), this protein is 2,3-bisphosphoglycerate-independent phosphoglycerate mutase.